The sequence spans 375 residues: Phosphoribulokinase, chloroplastic (375 aa).

A chloroplast-targeting transit peptide spans methionine 1–alanine 31. Cysteine 47 and cysteine 86 are disulfide-bonded.

Belongs to the phosphoribulokinase family. As to quaternary structure, component of a complex that contains two dimers of PRK, two tetramers of GAPDH and CP12.

Its subcellular location is the plastid. It is found in the chloroplast. It catalyses the reaction D-ribulose 5-phosphate + ATP = D-ribulose 1,5-bisphosphate + ADP + H(+). It participates in carbohydrate biosynthesis; Calvin cycle. With respect to regulation, light regulated via thioredoxin by reversible oxidation/reduction of sulfhydryl/disulfide groups. In Chlamydomonas reinhardtii (Chlamydomonas smithii), this protein is Phosphoribulokinase, chloroplastic (PRKA).